Consider the following 201-residue polypeptide: MSYIPYVVEQTSRGERTYDIYSRLLKDRIIFLGTEVNDVVANSIIAQLLFLESDDPEKDINFYINSPGGSVTAGMAIYDTMAYIKPEITTVCIGQAASMGAVLLAAGNHGKRYSLPNARILIHQPMGGFQGQASDIAIQAQEILRMKEALNEILASHTGKPLKQVQQDTDRDYFMSPLEAKEYGLIDHVILNREDLDSIEE.

Ser98 (nucleophile) is an active-site residue. Residue His123 is part of the active site.

Belongs to the peptidase S14 family. In terms of assembly, fourteen ClpP subunits assemble into 2 heptameric rings which stack back to back to give a disk-like structure with a central cavity, resembling the structure of eukaryotic proteasomes.

It is found in the cytoplasm. It catalyses the reaction Hydrolysis of proteins to small peptides in the presence of ATP and magnesium. alpha-casein is the usual test substrate. In the absence of ATP, only oligopeptides shorter than five residues are hydrolyzed (such as succinyl-Leu-Tyr-|-NHMec, and Leu-Tyr-Leu-|-Tyr-Trp, in which cleavage of the -Tyr-|-Leu- and -Tyr-|-Trp bonds also occurs).. Cleaves peptides in various proteins in a process that requires ATP hydrolysis. Has a chymotrypsin-like activity. Plays a major role in the degradation of misfolded proteins. The polypeptide is ATP-dependent Clp protease proteolytic subunit (Desulfatibacillum aliphaticivorans).